The primary structure comprises 402 residues: Phosphoglycerate kinase (402 aa).

Residues 24–26, Arg-40, 63–66, Arg-122, and Arg-155 each bind substrate; these read DFN and HFGR. ATP contacts are provided by residues Lys-206, Gly-297, Glu-328, and 357-360; that span reads GGDS.

The protein belongs to the phosphoglycerate kinase family. As to quaternary structure, monomer.

The protein resides in the cytoplasm. It catalyses the reaction (2R)-3-phosphoglycerate + ATP = (2R)-3-phospho-glyceroyl phosphate + ADP. The protein operates within carbohydrate degradation; glycolysis; pyruvate from D-glyceraldehyde 3-phosphate: step 2/5. In Prochlorococcus marinus (strain MIT 9211), this protein is Phosphoglycerate kinase.